Reading from the N-terminus, the 230-residue chain is Ubiquitin carboxyl-terminal hydrolase isozyme L3 (230 aa).

A UCH catalytic domain is found at 5 to 229; it reads RWLPLEANPE…LRFNAIALSA (225 aa). The interval 8 to 13 is interaction with ubiquitin; that stretch reads PLEANP. Residue Cys-95 is the Nucleophile of the active site. Position 130 is a phosphoserine (Ser-130). The segment at 152-159 is interaction with ubiquitin. Crossover loop which restricts access of large ubiquitin adducts to the active site; that stretch reads AHEGQTEA. Residue His-169 is the Proton donor of the active site. An interaction with ubiquitin region spans residues 219-224; it reads ELRFNA.

Belongs to the peptidase C12 family. In terms of assembly, preferentially binds diubiquitin; the interaction does not hydrolyze diubiquitin but, in vitro, inhibits the hydrolyzing activity on other substrates.

It is found in the cytoplasm. The enzyme catalyses Thiol-dependent hydrolysis of ester, thioester, amide, peptide and isopeptide bonds formed by the C-terminal Gly of ubiquitin (a 76-residue protein attached to proteins as an intracellular targeting signal).. Inhibited by monoubiquitin and diubiquitin. Deubiquitinating enzyme (DUB) that controls levels of cellular ubiquitin through processing of ubiquitin precursors and ubiquitinated proteins. Thiol protease that recognizes and hydrolyzes a peptide bond at the C-terminal glycine of either ubiquitin or NEDD8. Has a 10-fold preference for Arg and Lys at position P3''. Deubiquitinates ENAC in apical compartments, thereby regulating apical membrane recycling. Indirectly increases the phosphorylation of IGFIR, AKT and FOXO1 and promotes insulin-signaling and insulin-induced adipogenesis. Required for stress-response retinal, skeletal muscle and germ cell maintenance. May be involved in working memory. Can hydrolyze UBB(+1), a mutated form of ubiquitin which is not effectively degraded by the proteasome. This chain is Ubiquitin carboxyl-terminal hydrolase isozyme L3 (UCHL3), found in Bos taurus (Bovine).